Here is a 566-residue protein sequence, read N- to C-terminus: Lactase-like protein (566 aa).

An N-terminal signal peptide occupies residues 1-20 (MKPVWVIILGWILLVPRVGT). Topologically, residues 21 to 540 (AWRGPPEEAS…LLRHMHVASE (520 aa)) are extracellular. N170 and N244 each carry an N-linked (GlcNAc...) asparagine glycan. A helical transmembrane segment spans residues 541–561 (IVVPTVCALSILTAALMLTLL). At 562–566 (LRRRG) the chain is on the cytoplasmic side.

Belongs to the glycosyl hydrolase 1 family. Klotho subfamily. As to quaternary structure, may form dimers. Strongly expressed in the lens of the eye, where it localizes to the equatorial epithelium and outer layers of newly extending fiber cells (at protein level). May also be expressed in kidney and skin. However, another study suggests that expression is specific to eye and is minimal in other tissues.

The protein resides in the endoplasmic reticulum membrane. Plays a role in formation of the lens suture in the eye, which is important for normal optical properties of the lens. This is Lactase-like protein (Lctl) from Mus musculus (Mouse).